The sequence spans 376 residues: Lipid-A-disaccharide synthase (376 aa).

Belongs to the LpxB family.

It carries out the reaction a lipid X + a UDP-2-N,3-O-bis[(3R)-3-hydroxyacyl]-alpha-D-glucosamine = a lipid A disaccharide + UDP + H(+). It functions in the pathway bacterial outer membrane biogenesis; LPS lipid A biosynthesis. Its function is as follows. Condensation of UDP-2,3-diacylglucosamine and 2,3-diacylglucosamine-1-phosphate to form lipid A disaccharide, a precursor of lipid A, a phosphorylated glycolipid that anchors the lipopolysaccharide to the outer membrane of the cell. The polypeptide is Lipid-A-disaccharide synthase (Coxiella burnetii (strain CbuK_Q154) (Coxiella burnetii (strain Q154))).